Reading from the N-terminus, the 502-residue chain is Tubulin gamma chain (502 aa).

The span at 51 to 68 (ELNNSGSSPQSYPQQTKP) shows a compositional bias: polar residues. The tract at residues 51–73 (ELNNSGSSPQSYPQQTKPNGKYR) is disordered. 169–175 (AGGTGSG) contributes to the GTP binding site. Positions 473-482 (DDEDDLEDGD) are enriched in acidic residues. Residues 473–502 (DDEDDLEDGDGGGGGNGNGYNNIDDADMGI) are disordered.

Belongs to the tubulin family.

It is found in the cytoplasm. Its subcellular location is the cytoskeleton. The protein localises to the microtubule organizing center. The protein resides in the spindle pole body. Its function is as follows. Tubulin is the major constituent of microtubules. The gamma chain is found at microtubule organizing centers (MTOC) such as the spindle poles or the centrosome, suggesting that it is involved in the minus-end nucleation of microtubule assembly. This is Tubulin gamma chain (TUB4) from Candida albicans (Yeast).